A 140-amino-acid chain; its full sequence is Alpha-lactalbumin (140 aa).

The signal sequence occupies residues 1-19 (MMSLLPLLLIGIVLPATQA). One can recognise a C-type lysozyme domain in the interval 20–140 (KDYGKCELNQ…CRENLDQWNC (121 aa)). 4 cysteine pairs are disulfide-bonded: Cys-25-Cys-140, Cys-47-Cys-131, Cys-80-Cys-96, and Cys-92-Cys-110. Lys-98, Asp-101, Asp-103, Asp-106, and Asp-107 together coordinate Ca(2+).

As to quaternary structure, lactose synthase (LS) is a heterodimer of a catalytic component, beta1,4-galactosyltransferase (beta4Gal-T1) and a regulatory component, alpha-lactalbumin (LA). In terms of tissue distribution, mammary gland specific. Secreted in milk.

The protein localises to the secreted. Regulatory subunit of lactose synthase, changes the substrate specificity of galactosyltransferase in the mammary gland making glucose a good acceptor substrate for this enzyme. This enables LS to synthesize lactose, the major carbohydrate component of milk. In other tissues, galactosyltransferase transfers galactose onto the N-acetylglucosamine of the oligosaccharide chains in glycoproteins. This chain is Alpha-lactalbumin (LALBA), found in Trichosurus vulpecula (Brush-tailed possum).